The chain runs to 159 residues: Small ribosomal subunit protein uS9 (159 aa).

Belongs to the universal ribosomal protein uS9 family.

In Rickettsia massiliae (strain Mtu5), this protein is Small ribosomal subunit protein uS9.